Here is a 98-residue protein sequence, read N- to C-terminus: RNA-binding protein Hfq (98 aa).

The region spanning 11-71 (DVFLNHVRRS…ISTVMPATPV (61 aa)) is the Sm domain.

It belongs to the Hfq family. Homohexamer.

Functionally, RNA chaperone that binds small regulatory RNA (sRNAs) and mRNAs to facilitate mRNA translational regulation in response to envelope stress, environmental stress and changes in metabolite concentrations. Also binds with high specificity to tRNAs. This Gluconacetobacter diazotrophicus (strain ATCC 49037 / DSM 5601 / CCUG 37298 / CIP 103539 / LMG 7603 / PAl5) protein is RNA-binding protein Hfq.